The sequence spans 768 residues: Solabiose phosphorylase (768 aa).

Asp-456 acts as the Proton donor in catalysis.

The protein belongs to the glycosyl hydrolase 94 family.

It carries out the reaction solabiose + phosphate = D-galactose + alpha-D-glucose 1-phosphate. Its function is as follows. Catalyzes the reversible phosphorolysis of solabiose. Catalyzes the phosphorolysis and synthesis of solabiose through a sequential bi-bi mechanism involving the formation of a ternary complex. Is probably involved in the metabolism of solabiose released from solabiose-containing compounds. The sequence is that of Solabiose phosphorylase from Paenibacillus borealis.